We begin with the raw amino-acid sequence, 120 residues long: FK506-binding protein 1A (120 aa).

The region spanning 26–114 is the PPIase FKBP-type domain; it reads GDNVDVHYKG…IFETELVGIK (89 aa).

It belongs to the FKBP-type PPIase family. FKBP1 subfamily.

It is found in the cytoplasm. It catalyses the reaction [protein]-peptidylproline (omega=180) = [protein]-peptidylproline (omega=0). Functionally, PPIases accelerate the folding of proteins. It catalyzes the cis-trans isomerization of proline imidic peptide bonds in oligopeptides. The polypeptide is FK506-binding protein 1A (fkr-2) (Neurospora crassa (strain ATCC 24698 / 74-OR23-1A / CBS 708.71 / DSM 1257 / FGSC 987)).